The following is a 1025-amino-acid chain: Interferon-induced helicase C domain-containing protein 1 (1025 aa).

2 consecutive CARD domains span residues 7 to 97 (AEDS…YVKP) and 110 to 190 (AHDE…QTGN). Glycyl lysine isopeptide (Lys-Gly) (interchain with G-Cter in ISG15) cross-links involve residues Lys-23 and Lys-43. Residues 273–297 (SLGHNSNMGRDSGTMGSDSDESVIQ) are disordered. Residues 275–297 (GHNSNMGRDSGTMGSDSDESVIQ) show a composition bias toward polar residues. Phosphoserine occurs at positions 289, 291, and 302. In terms of domain architecture, Helicase ATP-binding spans 317-510 (AQPALDGKNI…SEAEKHILNI (194 aa)). Residues Ser-645 and Ser-648 each carry the phosphoserine modification. One can recognise a Helicase C-terminal domain in the interval 700 to 872 (KLIKLRNTIL…NMKPEEYAHK (173 aa)). Ser-828 bears the Phosphoserine; by RIOK3 mark. Positions 893-1020 (AKQYNDNPSL…PDLDYSEYCL (128 aa)) constitute an RLR CTR domain. Cys-907, Cys-910, Cys-962, and Cys-964 together coordinate Zn(2+).

Belongs to the helicase family. RLR subfamily. In terms of assembly, monomer in the absence of ligands and homodimerizes in the presence of dsRNA ligands. Can assemble into helical or linear polymeric filaments on long dsRNA. Interacts with MAVS/IPS1. Interacts (via the CARD domains) with TKFC, the interaction is inhibited by viral infection. Interacts with PCBP2. Interacts with NLRC5. Interacts with PIAS2-beta. Interacts with DDX60. Interacts with ANKRD17. Interacts with IKBKE. Interacts with ATG5 and ATG12, either as ATG5 and ATG12 monomers or as ATG12-ATG5 conjugates. Interacts with ZCCHC3; leading to activate IFIH1/MDA5. Interacts with RNF123. Interacts with DDX3X. Interacts with NOD1; this interaction promotes transcription of antiviral genes and inhibition of viral replication. Interacts with ECSIT; this interaction bridges IFIH1 to the MAVS complex at the mitochondrion. Post-translationally, during apoptosis, processed into 3 cleavage products. The helicase-containing fragment, once liberated from the CARD domains, translocate from the cytoplasm to the nucleus. The processed protein significantly sensitizes cells to DNA degradation. In terms of processing, sumoylated. Sumoylation positively regulates its role in type I interferon induction and is enhanced by PIAS2-beta. Ubiquitinated by RNF125, leading to its degradation by the proteasome. USP17/UPS17L2-dependent deubiquitination positively regulates the receptor. Ubiquitinated by TRIM25 via 'Lys-63'-linked ubiquitination, promoting activation of IFIH1/MDA5. Ubiquitinated by TRIM40 via 'Lys-48'-linked ubiquitination; leading to proteasomal degradation. Ubiquitinated by TRIM65 via 'Lys-63'-linked ubiquitination, promoting activation of IFIH1/MDA5. Post-translationally, ISGylated by ISG15. ISGylation increases upon infection with viruses. ISGylation at Lys-23 and Lys-43 is dependent of dephosphorylation, regulates mitochondrial translocation and oligomerization. Essential for IFIH1/MDA5-mediated cytokine responses and restriction of virus replication. In terms of processing, phosphorylated. Dephosphorylated by phsophatases PP1; dephosphorylation precedes and is required for ISGylation. In terms of tissue distribution, expression is prominent in lung, liver, kidney, heart and spleen (at protein level). Widely expressed at low level.

It localises to the cytoplasm. It is found in the nucleus. The protein localises to the mitochondrion. The catalysed reaction is ATP + H2O = ADP + phosphate + H(+). Its function is as follows. Innate immune receptor which acts as a cytoplasmic sensor of viral nucleic acids and plays a major role in sensing viral infection and in the activation of a cascade of antiviral responses including the induction of type I interferons and pro-inflammatory cytokines. Its ligands include mRNA lacking 2'-O-methylation at their 5' cap and long-dsRNA (&gt;1 kb in length). Upon ligand binding it associates with mitochondria antiviral signaling protein (MAVS/IPS1) which activates the IKK-related kinases: TBK1 and IKBKE which phosphorylate interferon regulatory factors: IRF3 and IRF7 which in turn activate transcription of antiviral immunological genes, including interferons (IFNs); IFN-alpha and IFN-beta. Responsible for detecting the Picornaviridae family members such as encephalomyocarditis virus (EMCV), mengo encephalomyocarditis virus (ENMG), and theiler's murine encephalomyelitis virus (TMEV). Can also detect other viruses such as dengue virus (DENV), west Nile virus (WNV), and reovirus. Also involved in antiviral signaling in response to viruses containing a dsDNA genome, such as vaccinia virus. Plays an important role in amplifying innate immune signaling through recognition of RNA metabolites that are produced during virus infection by ribonuclease L (RNase L). May play an important role in enhancing natural killer cell function and may be involved in growth inhibition and apoptosis in several tumor cell lines. In Mus musculus (Mouse), this protein is Interferon-induced helicase C domain-containing protein 1.